Here is a 607-residue protein sequence, read N- to C-terminus: Elongation factor 4 (607 aa).

A tr-type G domain is found at 11–193; sequence SKIRNFSIIA…QIVEKVPAPA (183 aa). Residues 23-28 and 140-143 each bind GTP; these read DHGKST and NKID.

The protein belongs to the TRAFAC class translation factor GTPase superfamily. Classic translation factor GTPase family. LepA subfamily.

Its subcellular location is the cell membrane. The enzyme catalyses GTP + H2O = GDP + phosphate + H(+). Required for accurate and efficient protein synthesis under certain stress conditions. May act as a fidelity factor of the translation reaction, by catalyzing a one-codon backward translocation of tRNAs on improperly translocated ribosomes. Back-translocation proceeds from a post-translocation (POST) complex to a pre-translocation (PRE) complex, thus giving elongation factor G a second chance to translocate the tRNAs correctly. Binds to ribosomes in a GTP-dependent manner. The polypeptide is Elongation factor 4 (Bacillus cereus (strain B4264)).